Consider the following 644-residue polypeptide: 3D-(3,5/4)-trihydroxycyclohexane-1,2-dione hydrolase (644 aa).

Glu65 contributes to the thiamine diphosphate binding site. The thiamine pyrophosphate binding stretch occupies residues 442–522 (SLPGDLQRMW…INVLLFDNSG (81 aa)). Mg(2+) is bound by residues Asp493 and Asn520.

The protein belongs to the TPP enzyme family. The cofactor is Mg(2+). Thiamine diphosphate is required as a cofactor.

The catalysed reaction is 3D-3,5/4-trihydroxycyclohexane-1,2-dione + H2O = 5-deoxy-D-glucuronate + H(+). It participates in polyol metabolism; myo-inositol degradation into acetyl-CoA; acetyl-CoA from myo-inositol: step 3/7. Involved in the cleavage of the C1-C2 bond of 3D-(3,5/4)-trihydroxycyclohexane-1,2-dione (THcHDO) to yield 5-deoxy-glucuronate (5DG). This Bacillus cereus (strain AH820) protein is 3D-(3,5/4)-trihydroxycyclohexane-1,2-dione hydrolase.